The primary structure comprises 84 residues: Kappa-conotoxin-like Im11.3 (84 aa).

An N-terminal signal peptide occupies residues 1–26; it reads MMFRLTSVSCFLLVIACLNLFQVVLT. Disulfide bonds link cysteine 29-cysteine 43, cysteine 36-cysteine 48, cysteine 42-cysteine 51, and cysteine 47-cysteine 64. Residues 71–84 constitute a propeptide that is removed on maturation; it reads LRPSHPLFLLLPAR.

This sequence belongs to the conotoxin I2 superfamily. As to expression, expressed by the venom duct.

The protein resides in the secreted. Inhibits the vertebrate voltage-gated potassium channels Kv1.1/KCNA1 and Kv1.3/KCNA3. The protein is Kappa-conotoxin-like Im11.3 of Conus imperialis (Imperial cone).